A 632-amino-acid chain; its full sequence is Epsin-3 (632 aa).

Residues Arg-8, Lys-11, Arg-25, Asn-30, Arg-63, and His-73 each coordinate a 1,2-diacyl-sn-glycero-3-phospho-(1D-myo-inositol-4,5-bisphosphate). Residues 12–144 (NIVHNYSEAE…KDEERLRQER (133 aa)) enclose the ENTH domain. Residues 172–214 (YGEDYSRSRGSPSSYNSSSSSPRYTSDLEQARPQTSGEEELQL) are disordered. Over residues 179-196 (SRGSPSSYNSSSSSPRYT) the composition is skewed to low complexity. 2 positions are modified to phosphoserine: Ser-191 and Ser-192. UIM domains lie at 209-228 (EEELQLQLALAMSREEAEKP) and 236-255 (DEDLQLQLALRLSRQEHEKE). Positions 257–296 (RSWQGDGSPMANGAGAVVHHQRDREPEREERKEEEKLKTS) are disordered. The residue at position 264 (Ser-264) is a Phosphoserine. A compositionally biased stretch (basic and acidic residues) spans 276 to 294 (HQRDREPEREERKEEEKLK). 8 consecutive repeat copies span residues 321-323 (DPW), 344-346 (DPW), 371-373 (EPW), 387-389 (DPW), 404-406 (DPW), 524-526 (NPF), 537-539 (NPF), and 629-631 (NPF). Residues 321 to 406 (DPWDIPGFRP…KLPSTGADPW (86 aa)) are 5 X 3 AA repeats of [DE]-P-W. Disordered stretches follow at residues 326–501 (PGFR…SFLG), 525–560 (PFLTGLSAPSPTNPFGAGEPGRPTLNQMRTGSPALG), and 604–632 (AFAPQPLLPTPSSAGPRPPPPQTGTNPFL). A compositionally biased stretch (polar residues) spans 353–371 (TVLSRSQPWDLTPMLSSSE). Residues 524-631 (NPFLTGLSAP…PPPQTGTNPF (108 aa)) are 3 X 3 AA repeats of N-P-F.

The protein belongs to the epsin family. As to expression, detected in migrating keratinocytes from wounded skin, but not in differentiating keratinocytes or in normal skin. Detected in chronic wounds, basal cell carcinoma and ulcerative colitis.

The protein localises to the cytoplasm. It is found in the perinuclear region. Its subcellular location is the cytoplasmic vesicle. It localises to the clathrin-coated vesicle. The protein resides in the nucleus. In Homo sapiens (Human), this protein is Epsin-3 (EPN3).